The primary structure comprises 415 residues: Proline-serine-threonine phosphatase-interacting protein 1 (415 aa).

The 260-residue stretch at 5-264 (LQFRDAFWCR…TLEGCDVEGD (260 aa)) folds into the F-BAR domain. Coiled-coil stretches lie at residues 94 to 133 (LALA…KLSL) and 162 to 215 (SANG…TCEA). Residue S318 is modified to Phosphoserine. Residue Y344 is modified to Phosphotyrosine; by ABL1. Residues 358–415 (SSAQDYRALYDYTAQNSDELDISAGDILAVILEGEDGWWTVERNGQRGFVPGSYLEKL) enclose the SH3 domain.

As to quaternary structure, homodimer. Homotrimer. Interacts (via coiled-coil domain) with CD2AP, PTPN12 and PTPN18. Interacts (via SH3 domain) with ABL1 and WAS. Interacts (via SH3 and coiled-coil domains) with MEFV (via B-box zinc finger); the interaction allows binding of MEFV to PYCARD and facilitates formation of PYCARD pyroptosomes. Interacts with DNM2 and FASLG. Interacts with CD2. In terms of processing, dephosphorylated on Tyr-344 by PTPN18, this event negatively regulates the association of PSTPIP1 with SH2 domain-containing proteins as tyrosine kinase. Phosphorylation of Tyr-344 is probably required for subsequent phosphorylation at other tyrosine residues. Phosphorylation is induced by activation of the EGFR and PDGFR in a ABL1 dependent manner. The phosphorylation regulates the interaction with WAS and with MEFV. Highly expressed in adult lung and spleen, and weakly expressed in testis, muscle, kidney, brain and heart. Highly expressed in spleen and thymus, moderately in lung, brain and muscle, and weakly expressed in heart and liver (at protein level).

Its subcellular location is the cytoplasm. The protein localises to the perinuclear region. It localises to the cell projection. The protein resides in the lamellipodium. It is found in the cleavage furrow. Its subcellular location is the cytoskeleton. The protein localises to the cell membrane. It localises to the uropodium. Functionally, involved in regulation of the actin cytoskeleton. May regulate WAS actin-bundling activity. Bridges the interaction between ABL1 and PTPN18 leading to ABL1 dephosphorylation. May play a role as a scaffold protein between PTPN12 and WAS and allow PTPN12 to dephosphorylate WAS. Has the potential to physically couple CD2 and CD2AP to WAS. Acts downstream of CD2 and CD2AP to recruit WAS to the T-cell:APC contact site so as to promote the actin polymerization required for synapse induction during T-cell activation. Down-regulates CD2-stimulated adhesion through the coupling of PTPN12 to CD2. Also has a role in innate immunity and the inflammatory response. Recruited to inflammasomes by MEFV. Induces formation of pyroptosomes, large supramolecular structures composed of oligomerized PYCARD dimers which form prior to inflammatory apoptosis. Binding to MEFV allows MEFV to bind to PYCARD and facilitates pyroptosome formation. Regulates endocytosis and cell migration in neutrophils. The polypeptide is Proline-serine-threonine phosphatase-interacting protein 1 (Pstpip1) (Mus musculus (Mouse)).